Here is a 398-residue protein sequence, read N- to C-terminus: O-methyltransferase mpaG (398 aa).

Asp-264 provides a ligand contact to S-adenosyl-L-methionine. Catalysis depends on His-306, which acts as the Proton acceptor. Catalysis depends on residues Glu-335 and Glu-362.

Belongs to the class I-like SAM-binding methyltransferase superfamily. Cation-independent O-methyltransferase family. COMT subfamily.

Its subcellular location is the cytoplasm. The protein resides in the cytosol. It catalyses the reaction (4E,8E)-10-(4,6-dihydroxy-7-methyl-3-oxo-1,3-dihydro-2-benzofuran-5-yl)-4,8-dimethyldeca-4,8-dienoate + S-adenosyl-L-methionine = (4E,8E)-10-(4-hydroxy-6-methoxy-7-methyl-3-oxo-1,3-dihydro-2-benzofuran-5-yl)-4,8-dimethyldeca-4,8-dienoate + S-adenosyl-L-homocysteine + H(+). Its pathway is secondary metabolite biosynthesis; terpenoid biosynthesis. O-methyltransferase; part of the gene cluster that mediates the biosynthesis of mycophenolic acid (MPA), the first isolated antibiotic natural product in the world obtained from a culture of Penicillium brevicompactum in 1893. MpaC methylates farnesyl-DHMP-3C (FDHMP-3C) to yield MFDHMP-3C. The first step of the pathway is the synthesis of 5-methylorsellinic acid (5MOA) by the cytosolic polyketide synthase mpaC. 5MOA is then converted to the phthalide compound 5,7-dihydroxy-4,6-dimethylphthalide (DHMP) by the endoplasmic reticulum-bound cytochrome P450 monooxygenase mpaDE. MpaDE first catalyzes hydroxylation of 5-MOA to 4,6-dihydroxy-2-(hydroxymethyl)-3-methylbenzoic acid (DHMB). MpaDE then acts as a lactone synthase that catalyzes the ring closure to convert DHMB into DHMP. The next step is the prenylation of DHMP by the Golgi apparatus-associated prenyltransferase mpaA to yield farnesyl-DHMP (FDHMP). The ER-bound oxygenase mpaB then mediates the oxidative cleavage the C19-C20 double bond in FDHMP to yield FDHMP-3C via a mycophenolic aldehyde intermediate. The O-methyltransferase mpaG catalyzes the methylation of FDHMP-3C to yield MFDHMP-3C. After the cytosolic methylation of FDHMP-3C, MFDHMP-3C enters into peroxisomes probably via free diffusion due to its low molecular weight. Upon a peroxisomal CoA ligation reaction, catalyzed by a beta-oxidation component enzyme acyl-CoA ligase ACL891, MFDHMP-3C-CoA would then be restricted to peroxisomes for the following beta-oxidation pathway steps. The peroxisomal beta-oxidation machinery than converts MFDHMP-3C-CoA into MPA_CoA, via a beta-oxidation chain-shortening process. Finally mpaH acts as a peroxisomal acyl-CoA hydrolase with high substrate specificity toward MPA-CoA to release the final product MPA. In Penicillium roqueforti (strain FM164), this protein is O-methyltransferase mpaG.